The primary structure comprises 189 residues: Peroxiredoxin sll1621 (189 aa).

In terms of domain architecture, Thioredoxin spans 2–177; sequence TPERVPSVVF…MLAYLKGAEA (176 aa). C55 serves as the catalytic Cysteine sulfenic acid (-SOH) intermediate (for peroxiredoxin activity).

The protein belongs to the peroxiredoxin family. Prx5 subfamily. As to quaternary structure, monomer.

The catalysed reaction is a hydroperoxide + 2 glutathione = an alcohol + glutathione disulfide + H2O. Its function is as follows. Thiol-specific peroxidase that catalyzes the reduction of hydrogen peroxide and organic hydroperoxides to water and alcohols, respectively. Plays a role in cell protection against oxidative stress by detoxifying peroxides. The polypeptide is Peroxiredoxin sll1621 (Synechocystis sp. (strain ATCC 27184 / PCC 6803 / Kazusa)).